A 477-amino-acid chain; its full sequence is UDP-N-acetylmuramate--L-alanine ligase (477 aa).

112–118 (GAHGKTT) lines the ATP pocket.

Belongs to the MurCDEF family.

It localises to the cytoplasm. The catalysed reaction is UDP-N-acetyl-alpha-D-muramate + L-alanine + ATP = UDP-N-acetyl-alpha-D-muramoyl-L-alanine + ADP + phosphate + H(+). It participates in cell wall biogenesis; peptidoglycan biosynthesis. In terms of biological role, cell wall formation. The protein is UDP-N-acetylmuramate--L-alanine ligase of Delftia acidovorans (strain DSM 14801 / SPH-1).